The primary structure comprises 297 residues: Ribonuclease HIII (297 aa).

An RNase H type-2 domain is found at 81 to 297 (IPIIGTDEVG…NTKKAQALLK (217 aa)). The a divalent metal cation site is built by D87, E88, and D192.

It belongs to the RNase HII family. RnhC subfamily. Mn(2+) serves as cofactor. It depends on Mg(2+) as a cofactor.

The protein resides in the cytoplasm. The enzyme catalyses Endonucleolytic cleavage to 5'-phosphomonoester.. Functionally, endonuclease that specifically degrades the RNA of RNA-DNA hybrids. This is Ribonuclease HIII from Streptococcus agalactiae serotype Ia (strain ATCC 27591 / A909 / CDC SS700).